A 330-amino-acid polypeptide reads, in one-letter code: Ribosomal RNA large subunit methyltransferase F (330 aa).

It belongs to the methyltransferase superfamily. METTL16/RlmF family.

The protein localises to the cytoplasm. It carries out the reaction adenosine(1618) in 23S rRNA + S-adenosyl-L-methionine = N(6)-methyladenosine(1618) in 23S rRNA + S-adenosyl-L-homocysteine + H(+). Its function is as follows. Specifically methylates the adenine in position 1618 of 23S rRNA. This Pseudoalteromonas atlantica (strain T6c / ATCC BAA-1087) protein is Ribosomal RNA large subunit methyltransferase F.